The primary structure comprises 102 residues: NADH-quinone oxidoreductase subunit K (102 aa).

The next 3 membrane-spanning stretches (helical) occupy residues 5-25 (LGHF…GIFL), 31-51 (IVLL…FVAF), and 62-82 (IFVF…LAIL).

It belongs to the complex I subunit 4L family. NDH-1 is composed of 14 different subunits. Subunits NuoA, H, J, K, L, M, N constitute the membrane sector of the complex.

It is found in the cell inner membrane. The enzyme catalyses a quinone + NADH + 5 H(+)(in) = a quinol + NAD(+) + 4 H(+)(out). In terms of biological role, NDH-1 shuttles electrons from NADH, via FMN and iron-sulfur (Fe-S) centers, to quinones in the respiratory chain. The immediate electron acceptor for the enzyme in this species is believed to be ubiquinone. Couples the redox reaction to proton translocation (for every two electrons transferred, four hydrogen ions are translocated across the cytoplasmic membrane), and thus conserves the redox energy in a proton gradient. The protein is NADH-quinone oxidoreductase subunit K of Albidiferax ferrireducens (strain ATCC BAA-621 / DSM 15236 / T118) (Rhodoferax ferrireducens).